The primary structure comprises 167 residues: MSTNFTFDKKNLNLAEDIIKKYPPHGKRSAILPLLDLAQRQNGGWLPVPAIEYVANMLEMPYMRAYEVATFYSMFNLKRVGKYHIQVCTTTPCWLHGSDDIMKICEKKLGIKLKETTEDQKFTLSEIECLGACVNAPVVQINDDYYEDLTEEKMEKLIDEYSNDFKN.

[2Fe-2S] cluster-binding residues include cysteine 88, cysteine 93, cysteine 129, and cysteine 133.

This sequence belongs to the complex I 24 kDa subunit family. It depends on [2Fe-2S] cluster as a cofactor.

It catalyses the reaction a quinone + NADH + 5 H(+)(in) = a quinol + NAD(+) + 4 H(+)(out). Its function is as follows. NDH-1 shuttles electrons from NADH, via FMN and iron-sulfur (Fe-S) centers, to quinones in the respiratory chain. Couples the redox reaction to proton translocation (for every two electrons transferred, four hydrogen ions are translocated across the cytoplasmic membrane), and thus conserves the redox energy in a proton gradient. This chain is NADH-quinone oxidoreductase subunit E (nuoE), found in Rickettsia felis (strain ATCC VR-1525 / URRWXCal2) (Rickettsia azadi).